A 365-amino-acid chain; its full sequence is Aminomethyltransferase (365 aa).

It belongs to the GcvT family. In terms of assembly, the glycine cleavage system is composed of four proteins: P, T, L and H.

It carries out the reaction N(6)-[(R)-S(8)-aminomethyldihydrolipoyl]-L-lysyl-[protein] + (6S)-5,6,7,8-tetrahydrofolate = N(6)-[(R)-dihydrolipoyl]-L-lysyl-[protein] + (6R)-5,10-methylene-5,6,7,8-tetrahydrofolate + NH4(+). In terms of biological role, the glycine cleavage system catalyzes the degradation of glycine. The protein is Aminomethyltransferase of Erwinia tasmaniensis (strain DSM 17950 / CFBP 7177 / CIP 109463 / NCPPB 4357 / Et1/99).